The chain runs to 838 residues: Xyloglucanase (838 aa).

The signal sequence occupies residues 1–19 (MKVSRVLALVLGAVIPAHA). The active-site Nucleophile is D53. N-linked (GlcNAc...) asparagine glycosylation is found at N232 and N436. D469 serves as the catalytic Proton donor. Residues 750 to 801 (GTGGTSSSTKQSSSSTSSASSSTTLRSSVVSTTRASTVTSSRTSSAAGPTGS) are disordered. A compositionally biased stretch (low complexity) spans 754-797 (TSSSTKQSSSSTSSASSSTTLRSSVVSTTRASTVTSSRTSSAAG). Residues 802 to 838 (GVAGHYAQCGGIGWTGPTQCVAPYVCQKQNDYYYQCV) enclose the CBM1 domain.

The protein belongs to the glycosyl hydrolase 74 family.

It catalyses the reaction Hydrolysis of (1-&gt;4)-D-glucosidic linkages in xyloglucans so as to successively remove oligosaccharides from the newly-formed chain end after endo-initiation on a polymer molecule.. Hydrolyzes the glucosidic bonds of unbranched Glc residues in tamarind seed xyloglucan, producing XXXG, XLXG, XXLG and XLLG. Has a low activity against beta-glucan and carboxymethylcellulose. Not active against Avicel, laminarin, xylan, galactomannan, linear and branched arabinans, galactan, polygalacturonic acid, starch, beta-D-Glcp, beta-D-cellobiose, beta-D-Galp, beta-D-Xylp, alpha-D-Xylp, alpha-L-Araf and alpha-L-Arap. The chain is Xyloglucanase from Hypocrea jecorina (strain QM6a) (Trichoderma reesei).